Reading from the N-terminus, the 282-residue chain is Pantothenate synthetase (282 aa).

30–37 (MGALHAGH) contributes to the ATP binding site. His-37 (proton donor) is an active-site residue. Gln-61 serves as a coordination point for (R)-pantoate. Gln-61 provides a ligand contact to beta-alanine. Residue 147 to 150 (GEKD) participates in ATP binding. Position 153 (Gln-153) interacts with (R)-pantoate. ATP contacts are provided by residues Val-176 and 184 to 187 (LSSR).

The protein belongs to the pantothenate synthetase family. As to quaternary structure, homodimer.

It is found in the cytoplasm. It catalyses the reaction (R)-pantoate + beta-alanine + ATP = (R)-pantothenate + AMP + diphosphate + H(+). It participates in cofactor biosynthesis; (R)-pantothenate biosynthesis; (R)-pantothenate from (R)-pantoate and beta-alanine: step 1/1. Catalyzes the condensation of pantoate with beta-alanine in an ATP-dependent reaction via a pantoyl-adenylate intermediate. This is Pantothenate synthetase from Bacteroides fragilis (strain ATCC 25285 / DSM 2151 / CCUG 4856 / JCM 11019 / LMG 10263 / NCTC 9343 / Onslow / VPI 2553 / EN-2).